The primary structure comprises 143 residues: 3-hydroxyacyl-[acyl-carrier-protein] dehydratase FabZ (143 aa).

His-48 is a catalytic residue.

This sequence belongs to the thioester dehydratase family. FabZ subfamily.

It is found in the cytoplasm. The enzyme catalyses a (3R)-hydroxyacyl-[ACP] = a (2E)-enoyl-[ACP] + H2O. Involved in unsaturated fatty acids biosynthesis. Catalyzes the dehydration of short chain beta-hydroxyacyl-ACPs and long chain saturated and unsaturated beta-hydroxyacyl-ACPs. The protein is 3-hydroxyacyl-[acyl-carrier-protein] dehydratase FabZ of Roseiflexus sp. (strain RS-1).